The primary structure comprises 376 residues: Chaperone protein DnaJ (376 aa).

Residues 5–69 (DYYEVLGISK…QKRAQYDQYG (65 aa)) form the J domain. The CR-type zinc-finger motif lies at 133–215 (GKDAEIEIPR…CHGKGRVTKT (83 aa)). Residues C146, C149, C163, C166, C189, C192, C203, and C206 each coordinate Zn(2+). 4 CXXCXGXG motif repeats span residues 146–153 (CDTCHGSG), 163–170 (CSHCGGKG), 189–196 (CQYCNGTG), and 203–210 (CSTCHGKG).

The protein belongs to the DnaJ family. As to quaternary structure, homodimer. Requires Zn(2+) as cofactor.

It is found in the cytoplasm. Its function is as follows. Participates actively in the response to hyperosmotic and heat shock by preventing the aggregation of stress-denatured proteins and by disaggregating proteins, also in an autonomous, DnaK-independent fashion. Unfolded proteins bind initially to DnaJ; upon interaction with the DnaJ-bound protein, DnaK hydrolyzes its bound ATP, resulting in the formation of a stable complex. GrpE releases ADP from DnaK; ATP binding to DnaK triggers the release of the substrate protein, thus completing the reaction cycle. Several rounds of ATP-dependent interactions between DnaJ, DnaK and GrpE are required for fully efficient folding. Also involved, together with DnaK and GrpE, in the DNA replication of plasmids through activation of initiation proteins. This chain is Chaperone protein DnaJ, found in Listeria welshimeri serovar 6b (strain ATCC 35897 / DSM 20650 / CCUG 15529 / CIP 8149 / NCTC 11857 / SLCC 5334 / V8).